Reading from the N-terminus, the 553-residue chain is Phosphoenolpyruvate carboxykinase (ATP) (553 aa).

The tract at residues 1 to 22 (MAPPTAVGSSINFEGHPTIKST) is disordered. Position 255 to 262 (255 to 262 (GLSGTGKT)) interacts with ATP.

Belongs to the phosphoenolpyruvate carboxykinase (ATP) family.

The catalysed reaction is oxaloacetate + ATP = phosphoenolpyruvate + ADP + CO2. Its pathway is carbohydrate biosynthesis; gluconeogenesis. The sequence is that of Phosphoenolpyruvate carboxykinase (ATP) (PCK1) from Candida albicans (Yeast).